A 161-amino-acid polypeptide reads, in one-letter code: ATP synthase subunit b' (161 aa).

The helical transmembrane segment at 30-47 (VMAIQFLVLAALLNKLFY) threads the bilayer.

This sequence belongs to the ATPase B chain family. F-type ATPases have 2 components, F(1) - the catalytic core - and F(0) - the membrane proton channel. F(1) has five subunits: alpha(3), beta(3), gamma(1), delta(1), epsilon(1). F(0) has four main subunits: a(1), b(1), b'(1) and c(10-14). The alpha and beta chains form an alternating ring which encloses part of the gamma chain. F(1) is attached to F(0) by a central stalk formed by the gamma and epsilon chains, while a peripheral stalk is formed by the delta, b and b' chains.

The protein resides in the cellular thylakoid membrane. F(1)F(0) ATP synthase produces ATP from ADP in the presence of a proton or sodium gradient. F-type ATPases consist of two structural domains, F(1) containing the extramembraneous catalytic core and F(0) containing the membrane proton channel, linked together by a central stalk and a peripheral stalk. During catalysis, ATP synthesis in the catalytic domain of F(1) is coupled via a rotary mechanism of the central stalk subunits to proton translocation. Its function is as follows. Component of the F(0) channel, it forms part of the peripheral stalk, linking F(1) to F(0). The b'-subunit is a diverged and duplicated form of b found in plants and photosynthetic bacteria. The chain is ATP synthase subunit b' from Picosynechococcus sp. (strain ATCC 27264 / PCC 7002 / PR-6) (Agmenellum quadruplicatum).